The sequence spans 63 residues: Cysteine-rich peptide clone 2 (63 aa).

The signal sequence occupies residues 1 to 23; that stretch reads MHFSGVVLILLSMTLVNFVFVET. Cystine bridges form between Cys-33-Cys-53, Cys-38-Cys-58, and Cys-42-Cys-60.

In terms of tissue distribution, expressed by the venom gland.

The protein resides in the secreted. The sequence is that of Cysteine-rich peptide clone 2 from Tityus costatus (Brazilian scorpion).